A 140-amino-acid chain; its full sequence is Transcription antitermination protein NusB (140 aa).

Belongs to the NusB family.

Functionally, involved in transcription antitermination. Required for transcription of ribosomal RNA (rRNA) genes. Binds specifically to the boxA antiterminator sequence of the ribosomal RNA (rrn) operons. This chain is Transcription antitermination protein NusB, found in Thermoanaerobacter pseudethanolicus (strain ATCC 33223 / 39E) (Clostridium thermohydrosulfuricum).